A 200-amino-acid polypeptide reads, in one-letter code: NAD(P)H dehydrogenase (quinone) (200 aa).

The 188-residue stretch at 4 to 191 folds into the Flavodoxin-like domain; that stretch reads VLVLYYSSYG…DIARYQGKHV (188 aa). FMN is bound by residues 10–15 and 79–81; these read SSYGHV and TRF. Y12 is a binding site for NAD(+). Residue W99 participates in substrate binding. Residues 114-120 and H135 each bind FMN; that span reads STGTQHG.

Belongs to the WrbA family. The cofactor is FMN.

It carries out the reaction a quinone + NADH + H(+) = a quinol + NAD(+). It catalyses the reaction a quinone + NADPH + H(+) = a quinol + NADP(+). This chain is NAD(P)H dehydrogenase (quinone), found in Burkholderia orbicola (strain MC0-3).